A 264-amino-acid chain; its full sequence is Inner membrane ABC transporter permease protein YdcV (264 aa).

The Cytoplasmic portion of the chain corresponds to 1 to 12; it reads MHSERAPFFLKL. A helical transmembrane segment spans residues 13–33; the sequence is AAWGGVVFLHFPILIIAAYAF. Over 34–70 the chain is Periplasmic; it reads NTEDAAFSFPPQGLTLRWFSVAAQRSDILDAVTLSLK. An ABC transmembrane type-1 domain is found at 65 to 252; it reads VTLSLKVAAL…MLVTTLPILG (188 aa). The chain crosses the membrane as a helical span at residues 71 to 91; it reads VAALATLIALVLGTLAAAALW. Residues 92–100 are Cytoplasmic-facing; that stretch reads RRDFFGKNA. Residues 101–121 traverse the membrane as a helical segment; sequence ISLLLLLPIALPGIVTGLALL. Topologically, residues 122–128 are periplasmic; it reads TAFKTIN. A helical transmembrane segment spans residues 129–149; that stretch reads LEPGFFTIVVGHATFCVVVVF. At 150–189 the chain is on the cytoplasmic side; sequence NNVIARFRRTSWSLVEASMDLGANGWQTFRYVVLPNLSSA. A helical transmembrane segment spans residues 190 to 210; sequence LLAGGMLAFALSFDEIIVTTF. Residues 211–236 lie on the Periplasmic side of the membrane; the sequence is TAGHERTLPLWLLNQLGRPRDVPVTN. The helical transmembrane segment at 237-257 threads the bilayer; that stretch reads VVALLVMLVTTLPILGAWWLT. Residues 258 to 264 lie on the Cytoplasmic side of the membrane; sequence REGDNGQ.

Belongs to the binding-protein-dependent transport system permease family. CysTW subfamily.

It localises to the cell inner membrane. In terms of biological role, probably part of the ABC transporter complex YdcSTUV. Probably responsible for the translocation of the substrate across the membrane. The chain is Inner membrane ABC transporter permease protein YdcV (ydcV) from Shigella flexneri.